A 120-amino-acid chain; its full sequence is MRTRSVDQDSKLCFFKALGLRPQEPLRRVACSVANKCAAKQYKRFKGVADIKRELGRFNLPPAQFNEALYLCRRHNAAWCTTDNWDRCGSVNERHVYEVDFDAQTKAVTERFYVCVQCFV.

Its subcellular location is the virion. The sequence is that of Putative 15 kDa capsid protein (P15) from Orgyia pseudotsugata (Douglas-fir tussock moth).